We begin with the raw amino-acid sequence, 124 residues long: Small ribosomal subunit protein uS12 (124 aa).

Aspartate 89 carries the post-translational modification 3-methylthioaspartic acid. The tract at residues 105–124 (QGVKNRKQARSRYGAKKEKS) is disordered. A compositionally biased stretch (basic residues) spans 108-118 (KNRKQARSRYG).

It belongs to the universal ribosomal protein uS12 family. In terms of assembly, part of the 30S ribosomal subunit. Contacts proteins S8 and S17. May interact with IF1 in the 30S initiation complex.

In terms of biological role, with S4 and S5 plays an important role in translational accuracy. Interacts with and stabilizes bases of the 16S rRNA that are involved in tRNA selection in the A site and with the mRNA backbone. Located at the interface of the 30S and 50S subunits, it traverses the body of the 30S subunit contacting proteins on the other side and probably holding the rRNA structure together. The combined cluster of proteins S8, S12 and S17 appears to hold together the shoulder and platform of the 30S subunit. The sequence is that of Small ribosomal subunit protein uS12 (rpsL) from Mycolicibacterium smegmatis (strain ATCC 700084 / mc(2)155) (Mycobacterium smegmatis).